A 92-amino-acid chain; its full sequence is Progonadoliberin-1 (92 aa).

The first 23 residues, 1 to 23, serve as a signal peptide directing secretion; sequence MELVPKFLAGLILLTLCVGGCYA. At Q24 the chain carries Pyrrolidone carboxylic acid. The residue at position 33 (G33) is a Glycine amide.

It belongs to the GnRH family.

It is found in the secreted. In terms of biological role, stimulates the secretion of gonadotropins; it stimulates the secretion of both luteinizing and follicle-stimulating hormones. This Tupaia belangeri (Common tree shrew) protein is Progonadoliberin-1 (GNRH1).